The primary structure comprises 148 residues: Ribosome maturation factor RimP (148 aa).

Belongs to the RimP family.

The protein localises to the cytoplasm. Its function is as follows. Required for maturation of 30S ribosomal subunits. The polypeptide is Ribosome maturation factor RimP (Thermosipho africanus (strain TCF52B)).